Reading from the N-terminus, the 563-residue chain is Arginine--tRNA ligase (563 aa).

The 'HIGH' region signature appears at 120 to 130 (PNIAKPFHVGH).

It belongs to the class-I aminoacyl-tRNA synthetase family. Monomer.

Its subcellular location is the cytoplasm. It catalyses the reaction tRNA(Arg) + L-arginine + ATP = L-arginyl-tRNA(Arg) + AMP + diphosphate. The sequence is that of Arginine--tRNA ligase from Clostridium acetobutylicum (strain ATCC 824 / DSM 792 / JCM 1419 / IAM 19013 / LMG 5710 / NBRC 13948 / NRRL B-527 / VKM B-1787 / 2291 / W).